Here is a 261-residue protein sequence, read N- to C-terminus: MPNLLEKTRKITSILQRSVDSLDAELPYNTMAAQLADIIDCNACIINGGGNLLGYAMKYKTNTDRVEEFFETKQFPDYYVKSASRVYDTEANLSVDNDLSIFPVETKENFQDGITTIAPIYGGGMRLGTFIIWRNDKEFSDDDLILVEIASTVVGIQLLNLQTENLEENIRKQTAVTMAINTLSYSEMKAVAAILGELDGLEGRLTASVIADRIGITRSVIVNALRKLESAGIIESRSLGMKGTYLKVINEGIFDKLKEYN.

The tract at residues 1-159 is GAF domain; sequence MPNLLEKTRK…ASTVVGIQLL (159 aa). The H-T-H motif DNA-binding region spans 207–226; the sequence is ASVIADRIGITRSVIVNALR.

The protein belongs to the CodY family.

The protein localises to the cytoplasm. Functionally, DNA-binding global transcriptional regulator which is involved in the adaptive response to starvation and acts by directly or indirectly controlling the expression of numerous genes in response to nutrient availability. During rapid exponential growth, CodY is highly active and represses genes whose products allow adaptation to nutrient depletion. This is Global transcriptional regulator CodY from Streptococcus agalactiae serotype III (strain NEM316).